The chain runs to 108 residues: Structural protein 1 (108 aa).

At 1 to 77 (MSRVSEYGVP…LKMQMDRLCN (77 aa)) the chain is on the intravirion side. A helical; Signal-anchor for type II membrane protein membrane pass occupies residues 78-98 (VLGVVLQMATLALVTYIAFVV). The Virion surface segment spans residues 99-108 (HTRATSCKRE).

It belongs to the varicellovirus ORF1 protein family. Homodimer. In terms of processing, phosphorylated.

The protein resides in the virion membrane. Its subcellular location is the host Golgi apparatus membrane. The sequence is that of Structural protein 1 from Homo sapiens (Human).